A 1094-amino-acid polypeptide reads, in one-letter code: MTNTKYYPEVSSNADFAAIEREILKFWQDNNIFQKSIDDRNGESEFIFYDGPPFANGLPHYGHLLTGFIKDVYARYQTVKGKKVERRFGWDCHGLPAEMQSEKELGISGRLAITNFGIEKFNSHCRASVMKYASDWEEYVTRQARWVDFKNSYKTMDKNFMESVIWAFKELYNKGLLYESMRVMPYSWACETPLSNFETRLDNSYRERADKAVTVSFVLNEIPAINGMTSRESGTTSSGDYKEYRILAWTTTPWTLPSNLALAVGSDIDYASIPKEDICYIIAASSVSKYAKELGLSGEENFEIIKGSALQGLSYKPLFDYFANHPNSFKIFAGDFVVEGDGTGIVHMAPGFGEDDQILCESKGISLVCPVDNSGKFTKEIPDLEGVQVFDANDKIIIKLKEQGNWLKTEQYIHNYPHCWRTDTPLIYKAVPSWYVKVTQFKDRMVELNQQINWIPFHVKDNLFGKWLENARDWSISRNRFWGTPLPVWKSDDPKYPRIDVYGSIEELEKDFGVKVTDLHRPFIDELARPNPNDPTGKSTMRRIEDVFDCWFESGSMPYGQAHYPFENKKWFEDHFPADFIVEYSAQTRGWFYTLMVLSTALFDRPPFLNCICHGVILDATGQKLSKRLNNYADPLELFDKYGSDALRVTMLSSNVVKGQELLIDKDGKMVFDTLRLFIKPIWNAYHFFTMYANADSLKGELNFASQNVLDIYILSKLKIAVNKIEESLDNFDTQTAYHAVSEFFEVLNNWYIRRSRARFWKSEKDADKQNAYNTLYSCLETMAIAMSALVPMISEAIYLGLCHKRPDVIARKDLSLDEAISGNSHEIATALSVPRNDGSISVHLCNYPNLSSFEINHELVATMDNVLDICSNSLFIRSTENIRVRQPLATITIISKHNDKLKSFEDLIKDEINVKSVIYRDDLENYASKKLSINFPMLGKRLPAKMKEIIAASKKGEWEAIGGGLAICDETLNSDEYKLVLEPHVHIKGAASFENNSSLLILDLELTAELIEEGYARDIVRFIQQARKDADFSITDRILIEIISEFDLSKIIDNYGDFIKEQTLGEFSKNFTPDYVSKVELENHQIQLKVKRS.

The 'HIGH' region signature appears at 53 to 63 (PFANGLPHYGH). The 'KMSKS' region signature appears at 624–628 (KLSKR). Lys627 serves as a coordination point for ATP.

Belongs to the class-I aminoacyl-tRNA synthetase family. IleS type 2 subfamily. In terms of assembly, monomer. Zn(2+) serves as cofactor.

The protein resides in the cytoplasm. The enzyme catalyses tRNA(Ile) + L-isoleucine + ATP = L-isoleucyl-tRNA(Ile) + AMP + diphosphate. Catalyzes the attachment of isoleucine to tRNA(Ile). As IleRS can inadvertently accommodate and process structurally similar amino acids such as valine, to avoid such errors it has two additional distinct tRNA(Ile)-dependent editing activities. One activity is designated as 'pretransfer' editing and involves the hydrolysis of activated Val-AMP. The other activity is designated 'posttransfer' editing and involves deacylation of mischarged Val-tRNA(Ile). This is Isoleucine--tRNA ligase from Rickettsia felis (strain ATCC VR-1525 / URRWXCal2) (Rickettsia azadi).